The sequence spans 231 residues: MNTQEIINLIANSKKRTIAKAYVSGNLKNIKLENVEFVGNELFGVLFGDLKDIENTINKNDIKNYKIEILAKNSAIPLADIKKYNARIEPGAIIRDMVEIGDGAVIMMGAVINIGAVIGEKTMIDMNTVIGGRAIIGKNCHIGAGSVIAGVIEPPSAKPVMIKDNVMVGANAVILEGVEIGEHSVIAAGAVVIEDIPPYSVVAGVPAKVIKKVDKKTESKTQIIDSLRNLK.

The protein belongs to the transferase hexapeptide repeat family. DapH subfamily.

The enzyme catalyses (S)-2,3,4,5-tetrahydrodipicolinate + acetyl-CoA + H2O = L-2-acetamido-6-oxoheptanedioate + CoA. It participates in amino-acid biosynthesis; L-lysine biosynthesis via DAP pathway; LL-2,6-diaminopimelate from (S)-tetrahydrodipicolinate (acetylase route): step 1/3. Functionally, catalyzes the transfer of an acetyl group from acetyl-CoA to tetrahydrodipicolinate. This Thermosipho melanesiensis (strain DSM 12029 / CIP 104789 / BI429) protein is 2,3,4,5-tetrahydropyridine-2,6-dicarboxylate N-acetyltransferase.